A 376-amino-acid chain; its full sequence is Pulmonary surfactant-associated protein B (376 aa).

Positions 1-24 (MAKLHLQWLLLLPTLCSLGAATES) are cleaved as a signal peptide. The 39-residue stretch at 25 to 63 (ASSPDCAQGPKFWCQSLEQAIQCRALGHCLQEVWGHAGA) folds into the Saposin A-type domain. The propeptide occupies 25 to 190 (ASSPDCAQGP…PHTQDLSEQQ (166 aa)). Saposin B-type domains follow at residues 63-145 (ANDL…PLGQ), 194-271 (PLPF…STAD), and 290-365 (QDTE…EAPA). Disulfide bonds link cysteine 67–cysteine 141, cysteine 70–cysteine 135, cysteine 98–cysteine 110, cysteine 198–cysteine 267, cysteine 201–cysteine 261, cysteine 225–cysteine 236, cysteine 294–cysteine 361, cysteine 297–cysteine 355, and cysteine 320–cysteine 330. The propeptide occupies 270–376 (ADAIGPALPA…PLQCFQTPHL (107 aa)). Asparagine 306 carries N-linked (GlcNAc...) asparagine glycosylation.

In terms of assembly, homodimer; disulfide-linked.

It localises to the secreted. Its subcellular location is the extracellular space. The protein resides in the surface film. In terms of biological role, pulmonary surfactant-associated proteins promote alveolar stability by lowering the surface tension at the air-liquid interface in the peripheral air spaces. SP-B increases the collapse pressure of palmitic acid to nearly 70 millinewtons per meter. In Rattus norvegicus (Rat), this protein is Pulmonary surfactant-associated protein B (Sftpb).